Consider the following 154-residue polypeptide: Iron-sulfur cluster assembly enzyme IscU (154 aa).

Belongs to the NifU family. As to quaternary structure, component of the mitochondrial core iron-sulfur cluster (ISC) assembly complex at least composed of the cystein desulfurase Nfs1, the scaffold protein IscU, the accessory protein bcn92/Isd11/Lyrm4, and probably fh/frataxin. Interacts with Nfs1. The cofactor is Fe(2+). Requires [2Fe-2S] cluster as cofactor.

It participates in cofactor biosynthesis; iron-sulfur cluster biosynthesis. In terms of biological role, scaffold protein for the de novo synthesis of iron-sulfur (Fe-S) clusters within mitochondria, which is required for maturation of both mitochondrial and cytoplasmic [2Fe-2S] and [4Fe-4S] proteins. Component of the mitochondrial core iron-sulfur cluster (ISC) assembly complex; regulates its activity. The protein is Iron-sulfur cluster assembly enzyme IscU of Drosophila melanogaster (Fruit fly).